A 477-amino-acid polypeptide reads, in one-letter code: Glycogen synthase (477 aa).

Position 15 (K15) interacts with ADP-alpha-D-glucose.

It belongs to the glycosyltransferase 1 family. Bacterial/plant glycogen synthase subfamily.

The enzyme catalyses [(1-&gt;4)-alpha-D-glucosyl](n) + ADP-alpha-D-glucose = [(1-&gt;4)-alpha-D-glucosyl](n+1) + ADP + H(+). It functions in the pathway glycan biosynthesis; glycogen biosynthesis. Synthesizes alpha-1,4-glucan chains using ADP-glucose. This Streptococcus pneumoniae (strain 70585) protein is Glycogen synthase.